The primary structure comprises 127 residues: MAANISKLEAIIDNTPNSSPDPEVSHKLWVSSLNKFQYTLPLLISNFAGLGIAFIYCLIAFIREMSHPSSRKDTMEHGLPIILCSTLMLVGNILYYFLSKHPLKVTVPEDLVQIPMQQMSSPAQEAP.

2 helical membrane-spanning segments follow: residues 42–62 (LLIS…IAFI) and 78–98 (GLPI…YYFL).

The protein resides in the membrane. This is an uncharacterized protein from Schizosaccharomyces pombe (strain 972 / ATCC 24843) (Fission yeast).